The following is a 227-amino-acid chain: Superoxide dismutase [Cu-Zn] (227 aa).

Residues 1 to 19 form the signal peptide; sequence MPKLLPPVVLAGCVVALGA. Cys20 is lipidated: N-palmitoyl cysteine. Cys20 is lipidated: S-diacylglycerol cysteine. The tract at residues 23–55 is disordered; that stretch reads PQHASSLPGTTPAVWTGSPSPSGAGAAEAAPAA. The span at 39 to 55 shows a compositional bias: low complexity; the sequence is GSPSPSGAGAAEAAPAA. 2 residues coordinate Cu cation: His103 and His105. Cys110 and Cys221 are disulfide-bonded. Position 145 (Asp145) interacts with Zn(2+). His182 is a Cu cation binding site.

Belongs to the Cu-Zn superoxide dismutase family. It depends on Cu cation as a cofactor. Requires Zn(2+) as cofactor.

The protein localises to the cell membrane. The enzyme catalyses 2 superoxide + 2 H(+) = H2O2 + O2. Functionally, destroys radicals which are normally produced within the cells and which are toxic to biological systems. May play a role in favoring mycobacterial survival in phagocytes. The chain is Superoxide dismutase [Cu-Zn] (sodC) from Mycolicibacterium paratuberculosis (strain ATCC BAA-968 / K-10) (Mycobacterium paratuberculosis).